Here is a 301-residue protein sequence, read N- to C-terminus: Hydroxymethylglutaryl-CoA lyase (301 aa).

Positions 4 to 271 constitute a Pyruvate carboxyltransferase domain; that stretch reads VKVFEVGPRD…STGVDLEAVA (268 aa). Arg12 provides a ligand contact to substrate. The a divalent metal cation site is built by Asp13, His204, and His206. Residue Cys237 is part of the active site. Residue Asn246 coordinates a divalent metal cation.

The protein belongs to the HMG-CoA lyase family.

It carries out the reaction (3S)-3-hydroxy-3-methylglutaryl-CoA = acetoacetate + acetyl-CoA. Its pathway is metabolic intermediate metabolism; (S)-3-hydroxy-3-methylglutaryl-CoA degradation; acetoacetate from (S)-3-hydroxy-3-methylglutaryl-CoA: step 1/1. Involved in the catabolism of branched amino acids such as leucine. The chain is Hydroxymethylglutaryl-CoA lyase (mvaB) from Pseudomonas mevalonii.